The sequence spans 168 residues: DNA damage-inducible transcript 3 protein (168 aa).

The interaction with TRIB3 stretch occupies residues 10–18 (LETVSSWEL). An N-terminal region spans residues 10-26 (LETVSSWELEAWYEDLQ). Phosphoserine; by CK2 occurs at positions 14, 15, 30, and 31. Positions 30–43 (SSDENGGPYSSSLG) are enriched in polar residues. The interval 30–168 (SSDENGGPYS…DRPHVNLQQV (139 aa)) is disordered. Positions 74 to 87 (SSSQSPRSPDSSQS) are enriched in low complexity. A phosphoserine; by MAPK14 mark is found at Ser78 and Ser81. The 64-residue stretch at 98–161 (GRTRKRKQSG…EATRPGSDRP (64 aa)) folds into the bZIP domain. Positions 101 to 129 (RKRKQSGQCPARGTGKQRMKEKEQENERK) are basic motif. Residues 118-162 (RMKEKEQENERKVAQLAEENERLKQEIERLTREVEATRPGSDRPH) show a composition bias toward basic and acidic residues. A leucine-zipper region spans residues 133–147 (LAEENERLKQEIERL).

The protein belongs to the bZIP family. As to quaternary structure, heterodimer. Interacts with TCF7L2/TCF4, EP300/P300, HDAC1, HDAC5 and HDAC6. Interacts with TRIB3 which blocks its association with EP300/P300. Interacts with FOXO3, CEBPB and ATF4. In terms of processing, ubiquitinated, leading to its degradation by the proteasome. Post-translationally, phosphorylation at serine residues by MAPK14 enhances its transcriptional activation activity while phosphorylation at serine residues by CK2 inhibits its transcriptional activation activity.

The protein localises to the cytoplasm. It localises to the nucleus. In terms of biological role, multifunctional transcription factor in ER stress response. Plays an essential role in the response to a wide variety of cell stresses and induces cell cycle arrest and apoptosis in response to ER stress. Plays a dual role both as an inhibitor of CCAAT/enhancer-binding protein (C/EBP) function and as an activator of other genes. Acts as a dominant-negative regulator of C/EBP-induced transcription: dimerizes with members of the C/EBP family, impairs their association with C/EBP binding sites in the promoter regions, and inhibits the expression of C/EBP regulated genes. Positively regulates the transcription of TRIB3, IL6, IL8, IL23, TNFRSF10B/DR5, PPP1R15A/GADD34, BBC3/PUMA, BCL2L11/BIM and ERO1L. Negatively regulates; expression of BCL2 and MYOD1, ATF4-dependent transcriptional activation of asparagine synthetase (ASNS), CEBPA-dependent transcriptional activation of hepcidin (HAMP) and CEBPB-mediated expression of peroxisome proliferator-activated receptor gamma (PPARG). Inhibits the canonical Wnt signaling pathway by binding to TCF7L2/TCF4, impairing its DNA-binding properties and repressing its transcriptional activity. Plays a regulatory role in the inflammatory response through the induction of caspase-11 (CASP4/CASP11) which induces the activation of caspase-1 (CASP1) and both these caspases increase the activation of pro-IL1B to mature IL1B which is involved in the inflammatory response. The chain is DNA damage-inducible transcript 3 protein (DDIT3) from Cricetulus griseus (Chinese hamster).